The sequence spans 139 residues: D-ribose pyranase (139 aa).

The active-site Proton donor is His20. Substrate is bound by residues Asp28, His106, and 128 to 130 (YAN).

It belongs to the RbsD / FucU family. RbsD subfamily. As to quaternary structure, homodecamer.

It localises to the cytoplasm. It catalyses the reaction beta-D-ribopyranose = beta-D-ribofuranose. It participates in carbohydrate metabolism; D-ribose degradation; D-ribose 5-phosphate from beta-D-ribopyranose: step 1/2. In terms of biological role, catalyzes the interconversion of beta-pyran and beta-furan forms of D-ribose. This Actinobacillus pleuropneumoniae serotype 5b (strain L20) protein is D-ribose pyranase.